Reading from the N-terminus, the 247-residue chain is D-alanyl-D-alanine dipeptidase (247 aa).

Zn(2+)-binding residues include His140 and Asp147. The active-site Proton donor/acceptor is the Glu215. Position 218 (His218) interacts with Zn(2+).

The protein belongs to the peptidase M15D family. Zn(2+) is required as a cofactor.

Its subcellular location is the cytoplasm. The catalysed reaction is D-alanyl-D-alanine + H2O = 2 D-alanine. In terms of biological role, catalyzes hydrolysis of the D-alanyl-D-alanine dipeptide. May have a role in cell-wall turnover. This Synechocystis sp. (strain ATCC 27184 / PCC 6803 / Kazusa) protein is D-alanyl-D-alanine dipeptidase.